A 73-amino-acid polypeptide reads, in one-letter code: Large ribosomal subunit protein bL31 (73 aa).

It belongs to the bacterial ribosomal protein bL31 family. Type A subfamily. As to quaternary structure, part of the 50S ribosomal subunit.

Binds the 23S rRNA. The sequence is that of Large ribosomal subunit protein bL31 from Rhizobium rhizogenes (strain K84 / ATCC BAA-868) (Agrobacterium radiobacter).